The chain runs to 686 residues: Methionine--tRNA ligase (686 aa).

Positions 15 to 25 match the 'HIGH' region motif; it reads PYTNGPIHIGH. Positions 147, 150, 160, and 163 each coordinate Zn(2+). Residues 336–340 carry the 'KMSKS' region motif; sequence KLSTS. Residue Thr339 coordinates ATP. The tRNA-binding domain maps to 584–686; it reads DFAKMDLRVG…AGVGNGEGIN (103 aa).

It belongs to the class-I aminoacyl-tRNA synthetase family. MetG type 1 subfamily. In terms of assembly, homodimer. The cofactor is Zn(2+).

The protein localises to the cytoplasm. It catalyses the reaction tRNA(Met) + L-methionine + ATP = L-methionyl-tRNA(Met) + AMP + diphosphate. In terms of biological role, is required not only for elongation of protein synthesis but also for the initiation of all mRNA translation through initiator tRNA(fMet) aminoacylation. The chain is Methionine--tRNA ligase from Flavobacterium psychrophilum (strain ATCC 49511 / DSM 21280 / CIP 103535 / JIP02/86).